The following is a 746-amino-acid chain: Protein zyg-11 homolog (746 aa).

3 LRR repeats span residues 185-209 (LPRL…GLRS), 216-241 (MHQL…VLQH), and 265-289 (LPQL…AFVE).

The protein belongs to the zyg-11 family.

Serves as substrate adapter subunit in an E3 ubiquitin ligase complex zyg11-cul2-elongin BC. Targets substrates bearing N-terminal glycine degrons for proteasomal degradation. The sequence is that of Protein zyg-11 homolog (zyg11) from Danio rerio (Zebrafish).